Reading from the N-terminus, the 1868-residue chain is MSIAIPLGVDTTETSYLEMAAGSEPESVEASPVVVEKSNSFPHQLYTSSSHHSHSYIGLPYADHNYGARPPPTPPASPPPSGLISKNEVGIFTTPNFDETSSATTISTSEDGSYGTDVTRCICGFTHDDGYMICCDKCSVWQHIDCMGIDRQHIPDTYLCERCQPRSLDKERAVLLQRRKRENMSDGDTSATESGDEVPVELYTAFQHTPTSITLTASRVPKVTDKRRKKSGEKEQNFSKCKKAFREGSRKSSRVKGSAPEIDPSSDSSNFVWETKIKAWMDRYEEANNNQYSEGVQREAQRLAQRLGSGNDSKDMNKSELSTNNSLFRPPVESHIQKNKKILKSAKDLPPDALIIEYRGKFMLREQFEANGYFFKRPYPFVLFYSKFHGLEMCVDARTFGNEARFIRRSCTPNAEVRHEIEEGTIHLYIYSIQSIPKGTEITIAFDFDYGNCKYKVDCACLKENPECPVLKRSSESTENINSGYETRRKKGKKEKDTSKEKDIQNQNMTLDCEGTNNKIRSPETKQRKLSPLRLSVSNNQEPDFIDDMEEKTPISNEVEMESEEQIAERKRKMTREERKMEAILQAFARLEKREKRREQALERISTAKTEVKPECKESQVIADAEVVQEQVKEETAIKPAAAKVNRTKQRKSFSRSRTHIGQQRRRHRTVSMCSDIPPSSPDIEVLSQQNEIENTVLAIEPETETAVAEIIPEAEVPALNKCPTKYPKTKKHLVNEWLSEKNEKTGKPSDSLSERPLRITTDPEVLATQLNSLPGLTYSPHVYSTPKHYIRFTSPFLSEKKRRKETTENISGSCKKRWLKQALEEENSTILHRYHSPCQERSRSPTVNGENKSPLLLSDSCSLPDLTTPLKKRRLYQLLDTAYSESSTPTPSPYATPTHTDITPTDPAFATPPRIKSDDETYRNGYKPIYSPVTPVTPGTPGNTMHFENISSPESSPEIKRCTYNQEGYDRPSNMLTLGPFRNSNLTELGLQEIKTIGYTSPRSRTEVNRPCPGEKESVSDLQLGLDAVEPAALQKSMETPAHDRTEPSNQLDSTHSGRGTMYSSWVKSPDRTGVNFSVNSNLRDLTPSHQLETGGGFRVSESKCLIQQDDTRGMFLGAAVFCTSEDGLASGFGRTVNDNLIDGSCTPQNPPQKKKVSLLEYRKRQREARKSGSKPENFALISVSPHPSGSLSSSGDGCVHSSENGEQAENQASLPLPPPAAAAAATAAAAYSASSEEGSSNCPVKDANSSEKKDPEVQWTASTSVEQVRERSYQRALLLSDHRKDKDSGGESPCVSCSPSHVQSPPSSHSNHIPQVHAQSLAPSLSELMADPDAEGTEATSTSECPSPDTSQSPSKTSKPGSPGPINPAQSHGKILTKPDSHWEATATVSEADNSVHQNPEPQHRQLSSNTPALSQNHAPQAHALSANDQLPQKLPSAPTKLHCPPSPHTENPPKSSTPHTPVQHGYLSPKPPSQHLGSPFRPHHSQSPQVGTPQRETQRNFYAAAQNLQANPQQATSGALFTQTPSGQSSATYSQFNQQSLNSTAPPPPPPPPPSSYYQNQQPSANFQNYNQLKGSLSQQTVFTSGPNQALPGSTSQQSVPGHHVTPGHFLPSQNPTIHHQPAAAAVVPPPPPPPPAPGPHLIQQPSSHQQHSVAHGVGPVHAVTPGSHIHSQTAGHHLPPPPPPPGPAPHHHPPPHPTTGLQSLQAQHQHVVNSAPPPPPPPPPPPPASVLVSGHHSASGQALHHPPHQGPPLFPASAHPAVPPYPSQATHHTTLGPGPQHQPSGTGPHCPLPVAGPHLQPQGPNSIPTPTASGFCPHPHPGSVALPHGVQGPQQASPVPAQIPIHRAQVPPTFQNNYHGSGWH.

The HCFC1-binding motif (HBM) signature appears at 63 to 66 (DHNY). Residues 118 to 166 (VTRCICGFTHDDGYMICCDKCSVWQHIDCMGIDRQHIPDTYLCERCQPR) form a PHD-type zinc finger. Positions 121, 123, 135, 138, 143, 146, 160, and 163 each coordinate Zn(2+). Disordered stretches follow at residues 178–197 (RRKR…SGDE), 217–268 (ASRV…SSDS), and 308–329 (GSGN…SLFR). One can recognise an SET domain in the interval 330–447 (PPVESHIQKN…KGTEITIAFD (118 aa)). An O-linked (GlcNAc) serine glycan is attached at serine 435. O-linked (GlcNAc) threonine glycosylation occurs at threonine 440. A disordered region spans residues 472-504 (KRSSESTENINSGYETRRKKGKKEKDTSKEKDI). Residues 494–504 (KEKDTSKEKDI) are compositionally biased toward basic and acidic residues. Residues 559–613 (VEMESEEQIAERKRKMTREERKMEAILQAFARLEKREKRREQALERISTAKTEVK) adopt a coiled-coil conformation. The span at 646–670 (NRTKQRKSFSRSRTHIGQQRRRHRT) shows a compositional bias: basic residues. The segment at 646 to 682 (NRTKQRKSFSRSRTHIGQQRRRHRTVSMCSDIPPSSP) is disordered. 2 positions are modified to phosphoserine: serine 837 and serine 845. Positions 884 to 908 (YSESSTPTPSPYATPTHTDITPTDP) are enriched in low complexity. Disordered regions lie at residues 884–924 (YSES…ETYR) and 1038–1068 (SMET…SSWV). Over residues 1049–1068 (PSNQLDSTHSGRGTMYSSWV) the composition is skewed to polar residues. Residue serine 1070 is modified to Phosphoserine. Disordered stretches follow at residues 1165-1222 (KRQR…PPPA), 1236-1315 (SSEE…SNHI), 1334-1565 (PDAE…QNQQ), and 1585-1842 (VFTS…QASP). Over residues 1184–1197 (SVSPHPSGSLSSSG) the composition is skewed to low complexity. Over residues 1203 to 1213 (SSENGEQAENQ) the composition is skewed to polar residues. Residue serine 1282 is modified to Phosphoserine. Residues 1282–1291 (SDHRKDKDSG) show a composition bias toward basic and acidic residues. Low complexity-rich tracts occupy residues 1294 to 1312 (SPCV…SSHS) and 1348 to 1363 (PSPD…SKPG). Serine 1364 is subject to Phosphoserine. 3 stretches are compositionally biased toward polar residues: residues 1389-1421 (ATVS…QNHA), 1451-1463 (HTEN…TPHT), and 1488-1498 (SQSPQVGTPQR). The segment covering 1506–1518 (AAAQNLQANPQQA) has biased composition (low complexity). Residues 1519–1547 (TSGALFTQTPSGQSSATYSQFNQQSLNST) show a composition bias toward polar residues. The segment covering 1548-1558 (APPPPPPPPPS) has biased composition (pro residues). Residues 1585–1603 (VFTSGPNQALPGSTSQQSV) show a composition bias toward polar residues. Pro residues predominate over residues 1631–1642 (VPPPPPPPPAPG). Residues 1647 to 1656 (QQPSSHQQHS) are compositionally biased toward polar residues. The segment covering 1682-1692 (LPPPPPPPGPA) has biased composition (pro residues). Positions 1706 to 1716 (QSLQAQHQHVV) are enriched in polar residues. Residues 1719–1732 (APPPPPPPPPPPPA) show a composition bias toward pro residues. Positions 1806–1816 (QGPNSIPTPTA) are enriched in polar residues.

This sequence belongs to the class V-like SAM-binding methyltransferase superfamily. Histone-lysine methyltransferase family. TRX/MLL subfamily. In terms of assembly, component of a complex composed of KMT2E, OGT and USP7; the complex stabilizes KMT2E, preventing KMT2E ubiquitination and proteasomal-mediated degradation. Interacts (via N-terminus) with OGT (via TRP repeats). Interacts with deubiquitinating enzyme USP7 (via MATH domain). Interacts (via HBM motif) with HCFC1 (via Kelch domain). Interacts with E2F1; the interaction is probably indirect and is mediated via HCFC1. Ubiquitinated. Deubiquitinated by USP7. Post-translationally, O-glycosylated at Ser-435 and Thr-440 in the SET domain by OGT which probably prevents KMT2E proteasomal-mediated degradation.

Its subcellular location is the chromosome. It is found in the cytoplasm. The protein resides in the cytoskeleton. It localises to the microtubule organizing center. The protein localises to the centrosome. Its subcellular location is the nucleus speckle. Its function is as follows. Associates with chromatin regions downstream of transcriptional start sites of active genes and thus regulates gene transcription. Chromatin interaction is mediated via the binding to tri-methylated histone H3 at 'Lys-4' (H3K4me3). Key regulator of hematopoiesis involved in terminal myeloid differentiation and in the regulation of hematopoietic stem cell (HSCs) self-renewal by a mechanism that involves DNA methylation. Also acts as an important cell cycle regulator, participating in cell cycle regulatory network machinery at multiple cell cycle stages including G1/S transition, S phase progression and mitotic entry. Recruited to E2F1 responsive promoters by HCFC1 where it stimulates tri-methylation of histone H3 at 'Lys-4' and transcriptional activation and thereby facilitates G1 to S phase transition. During myoblast differentiation, required to suppress inappropriate expression of S-phase-promoting genes and maintain expression of determination genes in quiescent cells. This Mus musculus (Mouse) protein is Inactive histone-lysine N-methyltransferase 2E (Kmt2e).